Consider the following 301-residue polypeptide: MSGRLDVLLVTGMSGAGKSTSLRVLEDLGWETLDNFPIRLLEPMIGEVLSSDNPAPLAVGFDSRTRGFVPNEIIELCKRLVQRDDLTLTTLFLDCTSEELERRFNETRRHHPMARGRTALEGIRAEREVMEPLRRWAEAVIDTSELAANELQQLIREQFHHDDPASQSVTVSSFGFARGMPPLADLVFDMRFLDNPHWVANLREQTGLDPAVGEYITARGDFDEIFQRMRDLILALLPRYRAQGKAYVHVAFGCTGGRHRSVFTAETMAQALREAGFSPTVVHRNLASRAADQFEGPQGRN.

ATP is bound at residue 12-19; the sequence is GMSGAGKS. 62 to 65 is a binding site for GTP; the sequence is DSRT.

It belongs to the RapZ-like family.

Functionally, displays ATPase and GTPase activities. This Erythrobacter litoralis (strain HTCC2594) protein is Nucleotide-binding protein ELI_02120.